Reading from the N-terminus, the 956-residue chain is Pollen-specific leucine-rich repeat extensin-like protein 1 (956 aa).

Residues Met1–Ala30 form the signal peptide. LRR repeat units follow at residues Leu39–Tyr59, Glu60–Lys84, Val119–Leu143, Thr144–Lys166, Thr168–Trp191, Pro192–Lys215, Leu217–Ser238, Ala240–Met261, Lys262–Leu285, Asn287–Leu309, and Ala310–Lys332. N-linked (GlcNAc...) asparagine glycosylation is found at Asn273 and Asn287. N-linked (GlcNAc...) asparagine glycosylation occurs at Asn338. Over residues Pro355 to Lys377 the composition is skewed to polar residues. Disordered stretches follow at residues Pro355–Lys380 and Cys397–Tyr956. The segment covering Ser408–Ala417 has biased composition (pro residues). Composition is skewed to basic and acidic residues over residues Glu431–Pro441 and Thr452–Pro534. Residues Gln640–Thr830 show a composition bias toward pro residues. A contains the Ser-Pro(4) repeats region spans residues Pro651–Tyr956. Residues Pro837 to Gln852 are compositionally biased toward polar residues. Residues Ser947–Tyr956 show a composition bias toward pro residues.

Post-translationally, hydroxylated on proline residues in the S-P-P-P-P repeat. O-glycosylated on hydroxyprolines. Expressed in flowers, stamen, pollen, and pollinated carpels.

It is found in the secreted. The protein localises to the cell wall. Functionally, modulates cell morphogenesis by regulating cell wall formation and assembly, and/or growth polarization. The protein is Pollen-specific leucine-rich repeat extensin-like protein 1 (PEX1) of Arabidopsis thaliana (Mouse-ear cress).